Consider the following 561-residue polypeptide: Melanopsin-A (561 aa).

At 1-34 the chain is on the extracellular side; sequence MRPSTDTMEADTAATHRNFITKVDVPDHAHYTVA. A helical membrane pass occupies residues 35–55; it reads FFVSVIGTLGVTGNALVQFAF. Topologically, residues 56 to 68 are cytoplasmic; the sequence is YSNKKLRNLPNYF. Residues 69–89 form a helical membrane-spanning segment; that stretch reads IMNQAASDFLMAFTQSPFFFI. Residues 90–104 lie on the Extracellular side of the membrane; the sequence is NCLNREWIFGELGCK. Cysteines 103 and 181 form a disulfide. Residues 105–125 traverse the membrane as a helical segment; sequence LYAFLGALFGITSMINLLAIS. Residues 126-148 lie on the Cytoplasmic side of the membrane; that stretch reads LDRYMVITRPLEAMKWNSKRRTT. The chain crosses the membrane as a helical span at residues 149–169; it reads IAILLVWLYSLAWSLAPLVGW. Over 170–201 the chain is Extracellular; that stretch reads SSYIPEGLRTSCTWDYVTYTASNRSYTMMLCC. Asn192 is a glycosylation site (N-linked (GlcNAc...) asparagine). A helical transmembrane segment spans residues 202-222; the sequence is FVFFIPLAIISYCYLFMFLAI. Over 223 to 255 the chain is Cytoplasmic; it reads RKTSRDVERLGIQVRKSTIIRQKSIRTEWKLAK. Residues 256–276 traverse the membrane as a helical segment; it reads IAFVVIVVYVLSWSPYACVTM. At 277 to 291 the chain is on the extracellular side; it reads ISWSGHANILSPYSK. Residues 292–312 traverse the membrane as a helical segment; that stretch reads TVPAVIAKASTIYNPFIYAII. Residue Lys299 is modified to N6-(retinylidene)lysine. The Cytoplasmic segment spans residues 313 to 561; that stretch reads HQKYRKTLAD…EDSLEDNDVV (249 aa). Disordered stretches follow at residues 359–385, 404–448, 479–503, and 539–561; these read AIRR…SYSS, ASFR…SATH, NGLS…SKSA, and SFTD…NDVV. Positions 371–385 are enriched in low complexity; the sequence is ASASKTAAGASSYSS. Residues 550-561 are compositionally biased toward acidic residues; it reads VDEDSLEDNDVV.

This sequence belongs to the G-protein coupled receptor 1 family. Opsin subfamily. As to expression, expressed in retina and brain. Expressed in a subset of retinal horizontal cells as well as a small number of amacrine and retinal ganglion cells. Also expressed in a small population of neurons in the suprachiasmatic nucleus (SNC).

It localises to the cell membrane. Functionally, photoreceptor implicated in non-image-forming responses to light. The sequence is that of Melanopsin-A (opn4a) from Gadus morhua (Atlantic cod).